Consider the following 35-residue polypeptide: Surfactant protein C (35 aa).

2 S-palmitoyl cysteine lipidation sites follow: Cys-5 and Cys-6.

It localises to the secreted. The protein resides in the extracellular space. The protein localises to the surface film. Functionally, pulmonary surfactant associated proteins promote alveolar stability by lowering the surface tension at the air-liquid interface in the peripheral air spaces. The sequence is that of Surfactant protein C (SFTPC) from Sus scrofa (Pig).